Consider the following 718-residue polypeptide: Methionine--tRNA ligase (718 aa).

A 'HIGH' region motif is present at residues 27–37 (PYANGQIHIGH). Residues Cys-158, Cys-161, Cys-171, and Cys-174 each contribute to the Zn(2+) site. Residues 348 to 352 (KMSKS) carry the 'KMSKS' region motif. Residue Lys-351 coordinates ATP. A tRNA-binding domain is found at 612–718 (DFAKIDLRIA…SGAKPGMRVK (107 aa)).

It belongs to the class-I aminoacyl-tRNA synthetase family. MetG type 1 subfamily. In terms of assembly, homodimer. The cofactor is Zn(2+).

The protein localises to the cytoplasm. It carries out the reaction tRNA(Met) + L-methionine + ATP = L-methionyl-tRNA(Met) + AMP + diphosphate. Is required not only for elongation of protein synthesis but also for the initiation of all mRNA translation through initiator tRNA(fMet) aminoacylation. This chain is Methionine--tRNA ligase, found in Burkholderia orbicola (strain AU 1054).